An 854-amino-acid polypeptide reads, in one-letter code: Cell division control protein 24 (854 aa).

Polar residues predominate over residues Met1 to Ser14. Residues Met1–Ser24 form a disordered region. The Calponin-homology (CH) domain occupies Pro135 to Pro246. In terms of domain architecture, DH spans Glu278–Asn454. The 191-residue stretch at Arg478–His668 folds into the PH domain. 2 disordered regions span residues Ile542 to Ile571 and Gln674 to Glu745. Positions Ser682–His707 are enriched in low complexity. The 94-residue stretch at Ser761–Tyr854 folds into the PB1 domain.

In terms of assembly, interacts with AXL2.

Promotes the exchange of CDC42-bound GDP by GTP. Controls the polarity of calmodulin, and the calcium regulatory process of bud emergence. CDC24 may be involved in the initial selection and organization of the budding site. In Saccharomyces cerevisiae (strain ATCC 204508 / S288c) (Baker's yeast), this protein is Cell division control protein 24 (CDC24).